We begin with the raw amino-acid sequence, 217 residues long: ATP phosphoribosyltransferase (217 aa).

It belongs to the ATP phosphoribosyltransferase family. Short subfamily. In terms of assembly, heteromultimer composed of HisG and HisZ subunits.

The protein resides in the cytoplasm. The enzyme catalyses 1-(5-phospho-beta-D-ribosyl)-ATP + diphosphate = 5-phospho-alpha-D-ribose 1-diphosphate + ATP. It participates in amino-acid biosynthesis; L-histidine biosynthesis; L-histidine from 5-phospho-alpha-D-ribose 1-diphosphate: step 1/9. In terms of biological role, catalyzes the condensation of ATP and 5-phosphoribose 1-diphosphate to form N'-(5'-phosphoribosyl)-ATP (PR-ATP). Has a crucial role in the pathway because the rate of histidine biosynthesis seems to be controlled primarily by regulation of HisG enzymatic activity. This Synechococcus sp. (strain WH7803) protein is ATP phosphoribosyltransferase.